Here is a 502-residue protein sequence, read N- to C-terminus: ATP synthase subunit alpha, chloroplastic (502 aa).

ATP is bound at residue 170–177 (GDRQTGKS).

It belongs to the ATPase alpha/beta chains family. In terms of assembly, F-type ATPases have 2 components, CF(1) - the catalytic core - and CF(0) - the membrane proton channel. CF(1) has five subunits: alpha(3), beta(3), gamma(1), delta(1), epsilon(1). CF(0) has four main subunits: a, b, b' and c.

Its subcellular location is the plastid. The protein localises to the chloroplast thylakoid membrane. It catalyses the reaction ATP + H2O + 4 H(+)(in) = ADP + phosphate + 5 H(+)(out). Produces ATP from ADP in the presence of a proton gradient across the membrane. The alpha chain is a regulatory subunit. This chain is ATP synthase subunit alpha, chloroplastic, found in Guillardia theta (Cryptophyte).